Consider the following 289-residue polypeptide: MVVTLDGEILQPGMPLLHADDLAAVRGDGVFETLLVRDGRACLVEAHLQRLTQSARLMDLPEPDLPRWRRAVEVATQRWVASTADEGALRLIYSRGREGGSAPTAYVMVSPVPARVIGARRDGVSAITLDRGLPADGGDAMPWLIASAKTLSYAVNMAVLRHAARQGAGDVIFVSTDGYVLEGPRSTVVIATDGDQGGGNPCLLTPPPWYPILRGTTQQALFEVARAKGYDCDYRALRVADLFDSQGIWLVSSMTLAARVHTLDGRRLPRTPIAEVFAELVDAAIVSDR.

Arg-50 is a binding site for pyridoxal 5'-phosphate. Lys-149 is subject to N6-(pyridoxal phosphate)lysine. Pyridoxal 5'-phosphate-binding residues include Tyr-153, Thr-216, and Thr-217. Residue Ser-252 participates in 2-oxoglutarate binding. Pyridoxal 5'-phosphate is bound at residue Ser-253. Positions 254 and 255 each coordinate 2-oxoglutarate.

It belongs to the class-IV pyridoxal-phosphate-dependent aminotransferase family. In terms of assembly, homodimer. Pyridoxal 5'-phosphate is required as a cofactor.

The catalysed reaction is 4-amino-4-deoxychorismate = 4-aminobenzoate + pyruvate + H(+). The enzyme catalyses D-alanine + 2-oxoglutarate = D-glutamate + pyruvate. It participates in cofactor biosynthesis; tetrahydrofolate biosynthesis; 4-aminobenzoate from chorismate: step 2/2. It functions in the pathway cell wall biogenesis; peptidoglycan biosynthesis. In terms of biological role, bifunctional enzyme that catalyzes two enzymatic reactions in biochemically unrelated pathways: acts as an aminodeoxychorismate (ADC) lyase (ADCL) in folate biosynthesis, converting 4-amino-4-deoxychorismate (ADC) to 4-aminobenzoate (PABA), and as a D-amino acid transaminase (DAAT) in peptidoglycan (PG) biosynthesis. DAAT activity is strictly restricted to D-alanine and D-glutamate. May function as a metabolic toggle that alternates between ADCL and DAAT activity, prioritizing the former over the latter in response to substrate accumulation. Bifunctionality of this enzyme provides a failsafe mechanism for a metabolic coupling between nucleic acid and cell wall biosynthesis that appears to ensure prioritization of PABA production over D-alanine/D-glutamate biosynthesis. This is Bifunctional aminodeoxychorismate lyase / D-amino acid transaminase from Mycobacterium tuberculosis (strain ATCC 25618 / H37Rv).